Consider the following 206-residue polypeptide: Large ribosomal subunit protein uL4 (206 aa).

The interval 46–89 (GNRAQKTRAEVKHSTKKPWRQKGTGRARSGMTSSPLWRKGGRAF) is disordered. Residues 59-70 (STKKPWRQKGTG) are compositionally biased toward basic residues.

This sequence belongs to the universal ribosomal protein uL4 family. As to quaternary structure, part of the 50S ribosomal subunit.

Functionally, one of the primary rRNA binding proteins, this protein initially binds near the 5'-end of the 23S rRNA. It is important during the early stages of 50S assembly. It makes multiple contacts with different domains of the 23S rRNA in the assembled 50S subunit and ribosome. Forms part of the polypeptide exit tunnel. This Neisseria gonorrhoeae (strain NCCP11945) protein is Large ribosomal subunit protein uL4.